We begin with the raw amino-acid sequence, 279 residues long: MAETKDQQNEVNIIIISDAAGDTAFSNATAAAAEFPKAQINYRRYPFITNKDKLDEVLEEIEKYPNLVIIYSLVKDEMQMPVIKFAREHNIQCVDIFSPVVEAIKQTTHMTPDQKIGAQHSLNQKYFDRISAMEFAVMYDDGKDPKGFLEADVVLLGVSRTSKTPLSLFLANKNLKVANLPLVPETHIPKEIYEIDPKKIIGLTNDPSVLNEIRRQRMIAYGLNPDTTYSNMDSINKELESAQALYKKLGCYVINVAHRSIEETAALILEHLGIDDYAK.

Position 157 to 164 (157 to 164) interacts with ADP; the sequence is GVSRTSKT.

Belongs to the pyruvate, phosphate/water dikinase regulatory protein family. PDRP subfamily.

The enzyme catalyses N(tele)-phospho-L-histidyl/L-threonyl-[pyruvate, phosphate dikinase] + ADP = N(tele)-phospho-L-histidyl/O-phospho-L-threonyl-[pyruvate, phosphate dikinase] + AMP + H(+). It carries out the reaction N(tele)-phospho-L-histidyl/O-phospho-L-threonyl-[pyruvate, phosphate dikinase] + phosphate + H(+) = N(tele)-phospho-L-histidyl/L-threonyl-[pyruvate, phosphate dikinase] + diphosphate. Bifunctional serine/threonine kinase and phosphorylase involved in the regulation of the pyruvate, phosphate dikinase (PPDK) by catalyzing its phosphorylation/dephosphorylation. This Lactobacillus helveticus (strain DPC 4571) protein is Putative pyruvate, phosphate dikinase regulatory protein.